The primary structure comprises 281 residues: Phosphatidylglycerol--prolipoprotein diacylglyceryl transferase (281 aa).

7 helical membrane passes run 11–31 (IIFT…VISF), 57–77 (LLYS…IIFY), 89–109 (VFYI…AIIV), 121–141 (ILEI…AGRI), 194–214 (PTQL…IYFF), 222–242 (GSIS…IEFF), and 255–275 (IITM…IIMY). Residue R140 participates in a 1,2-diacyl-sn-glycero-3-phospho-(1'-sn-glycerol) binding.

It belongs to the Lgt family.

The protein resides in the cell inner membrane. The catalysed reaction is L-cysteinyl-[prolipoprotein] + a 1,2-diacyl-sn-glycero-3-phospho-(1'-sn-glycerol) = an S-1,2-diacyl-sn-glyceryl-L-cysteinyl-[prolipoprotein] + sn-glycerol 1-phosphate + H(+). Its pathway is protein modification; lipoprotein biosynthesis (diacylglyceryl transfer). Its function is as follows. Catalyzes the transfer of the diacylglyceryl group from phosphatidylglycerol to the sulfhydryl group of the N-terminal cysteine of a prolipoprotein, the first step in the formation of mature lipoproteins. The protein is Phosphatidylglycerol--prolipoprotein diacylglyceryl transferase of Buchnera aphidicola subsp. Acyrthosiphon pisum (strain 5A).